A 300-amino-acid chain; its full sequence is Glycine--tRNA ligase alpha subunit (300 aa).

The protein belongs to the class-II aminoacyl-tRNA synthetase family. As to quaternary structure, tetramer of two alpha and two beta subunits.

The protein resides in the cytoplasm. The enzyme catalyses tRNA(Gly) + glycine + ATP = glycyl-tRNA(Gly) + AMP + diphosphate. The polypeptide is Glycine--tRNA ligase alpha subunit (glyQ) (Buchnera aphidicola subsp. Baizongia pistaciae (strain Bp)).